We begin with the raw amino-acid sequence, 288 residues long: Orotidine 5'-phosphate decarboxylase (288 aa).

Residue Lys-99 is the Proton donor of the active site.

It belongs to the OMP decarboxylase family. Type 2 subfamily.

It carries out the reaction orotidine 5'-phosphate + H(+) = UMP + CO2. It participates in pyrimidine metabolism; UMP biosynthesis via de novo pathway; UMP from orotate: step 2/2. This chain is Orotidine 5'-phosphate decarboxylase (pyrF), found in Myxococcus xanthus (strain DK1622).